Here is a 177-residue protein sequence, read N- to C-terminus: MPGDPTATAKGNEIPDTLMGYIPWTPELDSGEVCGIPTTFKTRDEWKGKKVVIVSIPGAYTPICHQQHIPPLVKRVDELKAKGVDAVYVIASNDPFVMAAWGNFNNAKDKVVFATDIDLAFSKALGATIDLSAKHFGERTARYALIIDDNKIVDFASDEGDTGKLQNASIDTILTKV.

In terms of domain architecture, Thioredoxin spans Thr8 to Val177. The active-site Cysteine sulfenic acid (-SOH) intermediate is Cys64. The short motif at Thr175–Val177 is the Microbody targeting signal element.

Belongs to the peroxiredoxin family. Prx5 subfamily. In terms of assembly, homodimer; disulfide-linked, upon oxidation.

It carries out the reaction a hydroperoxide + [thioredoxin]-dithiol = an alcohol + [thioredoxin]-disulfide + H2O. In terms of biological role, thiol-specific peroxidase that catalyzes the reduction of hydrogen peroxide and organic hydroperoxides to water and alcohols, respectively. Plays a role in cell protection against oxidative stress by detoxifying peroxides and as sensor of hydrogen peroxide-mediated signaling events. The sequence is that of Putative peroxiredoxin from Malassezia furfur (Pityriasis versicolor infection agent).